A 368-amino-acid polypeptide reads, in one-letter code: DNA-directed RNA polymerase II subunit GRINL1A (368 aa).

Positions 29–68 are important for transcription repressor activity; sequence KRQERLLRNEKFICKLPDKGKKIFDSFAKLKAAIAECEEV. 3 stretches are compositionally biased toward polar residues: residues 116 to 131, 205 to 224, and 258 to 273; these read SSVD…QNQG, GEQQ…LSSG, and QNDS…SPIS. Disordered stretches follow at residues 116–186, 203–227, and 255–282; these read SSVD…DTSS, DQGE…GTEK, and PFRQ…RRDK. An interaction with Pol II region spans residues 227–298; it reads KKPHYMEVLE…TAARLLPLHH (72 aa). Ser-270 carries the phosphoserine modification. The segment at 299–314 is important for transcription repressor activity; the sequence is MPTQLLSIEESLALQK. Positions 301-335 form a coiled coil; sequence TQLLSIEESLALQKQQKQNYEEMQAKLAAQKLAER. The interval 315–340 is interaction with Pol II; the sequence is QQKQNYEEMQAKLAAQKLAERLNIKM. The segment at 339-368 is disordered; that stretch reads KMRSYNPEGESSGRYREVRDEDDDWSSDEF. The span at 358–368 shows a compositional bias: acidic residues; sequence DEDDDWSSDEF.

This sequence belongs to the GRINL1 family. In terms of assembly, component of the Pol II(G) complex, which contains the RNA polymerase II (Pol II) core complex subunits and POLR2M isoform 1. Pol II(G) appears to be an abundant form of Pol II. Post-translationally, dephosphorylated at Ser-270 by the PNUTS-PP1 complex, promoting RNA polymerase II transcription pause-release. Detected in adult an fetal brain. Detected in heart, kidney, skeletal muscle, small intestine, lung, prostate and testis.

The protein localises to the nucleus. Functionally, appears to be a stable component of the Pol II(G) complex form of RNA polymerase II (Pol II). Pol II synthesizes mRNA precursors and many functional non-coding RNAs and is the central component of the basal RNA polymerase II transcription machinery. May play a role in the Mediator complex-dependent regulation of transcription activation. Acts as a negative regulator of transcriptional activation; this repression is relieved by the Mediator complex, which restores Pol II(G) activator-dependent transcription to a level equivalent to that of Pol II. This Homo sapiens (Human) protein is DNA-directed RNA polymerase II subunit GRINL1A (POLR2M).